The chain runs to 301 residues: Sulfate adenylyltransferase subunit 2 (301 aa).

The tract at residues 279–301 is disordered; that stretch reads RQGRLIDRDEAGSMEKKKREGYF.

The protein belongs to the PAPS reductase family. CysD subfamily. In terms of assembly, heterodimer composed of CysD, the smaller subunit, and CysN.

It carries out the reaction sulfate + ATP + H(+) = adenosine 5'-phosphosulfate + diphosphate. It participates in sulfur metabolism; hydrogen sulfide biosynthesis; sulfite from sulfate: step 1/3. Its function is as follows. With CysN forms the ATP sulfurylase (ATPS) that catalyzes the adenylation of sulfate producing adenosine 5'-phosphosulfate (APS) and diphosphate, the first enzymatic step in sulfur assimilation pathway. APS synthesis involves the formation of a high-energy phosphoric-sulfuric acid anhydride bond driven by GTP hydrolysis by CysN coupled to ATP hydrolysis by CysD. The chain is Sulfate adenylyltransferase subunit 2 from Mesorhizobium japonicum (strain LMG 29417 / CECT 9101 / MAFF 303099) (Mesorhizobium loti (strain MAFF 303099)).